We begin with the raw amino-acid sequence, 460 residues long: Squalene synthase (460 aa).

The chain crosses the membrane as a helical span at residues 425 to 445 (ISILFVFFIILVCLAVIFYVF).

The protein belongs to the phytoene/squalene synthase family. As to quaternary structure, interacts with pof14. It depends on Mg(2+) as a cofactor.

Its subcellular location is the endoplasmic reticulum membrane. It catalyses the reaction 2 (2E,6E)-farnesyl diphosphate + NADPH + H(+) = squalene + 2 diphosphate + NADP(+). The enzyme catalyses 2 (2E,6E)-farnesyl diphosphate + NADH + H(+) = squalene + 2 diphosphate + NAD(+). The protein operates within terpene metabolism; lanosterol biosynthesis; lanosterol from farnesyl diphosphate: step 1/3. Its pathway is steroid metabolism; ergosterol biosynthesis. In terms of biological role, squalene synthase; part of the third module of ergosterol biosynthesis pathway that includes by the late steps of the pathway. Erg9 produces squalene from 2 farnesyl pyrophosphate moieties. The third module or late pathway involves the ergosterol synthesis itself through consecutive reactions that mainly occur in the endoplasmic reticulum (ER) membrane. Firstly, the squalene synthase erg9 catalyzes the condensation of 2 farnesyl pyrophosphate moieties to form squalene, which is the precursor of all steroids. Secondly, squalene is converted into lanosterol by the consecutive action of the squalene epoxidase erg1 and the lanosterol synthase erg7. The lanosterol 14-alpha-demethylase erg11/cyp1 catalyzes C14-demethylation of lanosterol to produce 4,4'-dimethyl cholesta-8,14,24-triene-3-beta-ol. In the next steps, a complex process involving various demethylation, reduction and desaturation reactions catalyzed by the C-14 reductase erg24 and the C-4 demethylation complex erg25-erg26-erg27 leads to the production of zymosterol. Erg28 likely functions in the C-4 demethylation complex reaction by tethering erg26 and Erg27 to the endoplasmic reticulum or to facilitate interaction between these proteins. Then, the sterol 24-C-methyltransferase erg6 catalyzes the methyl transfer from S-adenosyl-methionine to the C-24 of zymosterol to form fecosterol. The C-8 sterol isomerase erg2 catalyzes the reaction which results in unsaturation at C-7 in the B ring of sterols and thus converts fecosterol to episterol. The sterol-C5-desaturases erg31 and erg32 then catalyze the introduction of a C-5 double bond in the B ring to produce 5-dehydroepisterol. The C-22 sterol desaturase erg5 further converts 5-dehydroepisterol into ergosta-5,7,22,24(28)-tetraen-3beta-ol by forming the C-22(23) double bond in the sterol side chain. Finally, ergosta-5,7,22,24(28)-tetraen-3beta-ol is substrate of the C-24(28) sterol reductase erg4 to produce ergosterol. In the genus Schizosaccharomyces, a second route exists between lanosterol and fecosterol, via the methylation of lanosterol to eburicol by erg6, followed by C14-demethylation by erg11/cyp1 and C4-demethylation by the demethylation complex erg25-erg26-erg27. This chain is Squalene synthase, found in Schizosaccharomyces pombe (strain 972 / ATCC 24843) (Fission yeast).